Reading from the N-terminus, the 714-residue chain is GATA zinc finger domain-containing protein 10 (714 aa).

6 disordered regions span residues 28 to 97 (YIQQ…NKQI), 115 to 180 (TMPH…QQQQ), 266 to 362 (MPMN…QQQQ), 394 to 419 (QQQQ…ESMD), 454 to 476 (MHLQ…QQIQ), and 528 to 621 (IQQQ…RRRT). Composition is skewed to low complexity over residues 30–94 (QQQQ…NNNN) and 130–147 (QQQQ…QHPH). Over residues 148 to 168 (QQQHPHQQQHPHQQQHPHQQQ) the composition is skewed to basic residues. Residues 169–180 (HPHQQQIQQQQQ) are compositionally biased toward low complexity. The segment covering 271 to 282 (GGNSRKNSFDMY) has biased composition (polar residues). Low complexity-rich tracts occupy residues 283 to 322 (NNNN…NNNI) and 340 to 362 (QHQQ…QQQQ). 2 stretches are compositionally biased toward low complexity: residues 457–476 (QQQQ…QQIQ) and 528–549 (IQQQ…TPNN). The segment covering 550–569 (GSPSSSDGKSPVNSNTAITS) has biased composition (polar residues). Positions 570-588 (NNNNNNNNNNNNNNNNNNN) are enriched in low complexity. The GATA-type zinc finger occupies 631–656 (CHYCEVTETPEWRRGPDGDHTLCNAC). Residues 661–694 (AKSQKKLAREKELEKQKELEREKERENTRKHSID) are a coiled coil. Residues 667 to 693 (LAREKELEKQKELEREKERENTRKHSI) show a composition bias toward basic and acidic residues. A disordered region spans residues 667–714 (LAREKELEKQKELEREKERENTRKHSIDFMLMNDTSSAPTNSQNPTPN). Polar residues predominate over residues 699 to 714 (NDTSSAPTNSQNPTPN).

In Dictyostelium discoideum (Social amoeba), this protein is GATA zinc finger domain-containing protein 10 (gtaJ).